A 364-amino-acid polypeptide reads, in one-letter code: UDP-N-acetylglucosamine--N-acetylmuramyl-(pentapeptide) pyrophosphoryl-undecaprenol N-acetylglucosamine transferase 1 (364 aa).

UDP-N-acetyl-alpha-D-glucosamine is bound by residues T10 to G12, N124, S195, I250, and Q295.

This sequence belongs to the glycosyltransferase 28 family. MurG subfamily.

The protein localises to the cell membrane. The catalysed reaction is di-trans,octa-cis-undecaprenyl diphospho-N-acetyl-alpha-D-muramoyl-L-alanyl-D-glutamyl-meso-2,6-diaminopimeloyl-D-alanyl-D-alanine + UDP-N-acetyl-alpha-D-glucosamine = di-trans,octa-cis-undecaprenyl diphospho-[N-acetyl-alpha-D-glucosaminyl-(1-&gt;4)]-N-acetyl-alpha-D-muramoyl-L-alanyl-D-glutamyl-meso-2,6-diaminopimeloyl-D-alanyl-D-alanine + UDP + H(+). The protein operates within cell wall biogenesis; peptidoglycan biosynthesis. Functionally, cell wall formation. Catalyzes the transfer of a GlcNAc subunit on undecaprenyl-pyrophosphoryl-MurNAc-pentapeptide (lipid intermediate I) to form undecaprenyl-pyrophosphoryl-MurNAc-(pentapeptide)GlcNAc (lipid intermediate II). In Bacillus cereus (strain ATCC 10987 / NRS 248), this protein is UDP-N-acetylglucosamine--N-acetylmuramyl-(pentapeptide) pyrophosphoryl-undecaprenol N-acetylglucosamine transferase 1.